The chain runs to 962 residues: Cohesin subunit psc3 (962 aa).

The tract at residues 1–72 is disordered; it reads MSESVTTGSD…GVNVKRSRRN (72 aa). A compositionally biased stretch (polar residues) spans 21–30; the sequence is VMLSQSFDPM. Basic residues predominate over residues 51-71; that stretch reads SSKKRHPRPNSKGVNVKRSRR. Positions 236-275 form a coiled coil; that stretch reads LCEKSKELLNEHAIATKQLEKEEKRSRVNRNRINELNNSL. The SCD domain maps to 297–382; that stretch reads FVHRYRDVEP…SRFKERILEM (86 aa).

It belongs to the SCC3 family. In terms of assembly, cohesin complexes are composed of the psm1/smc1 and psm3/smc3 heterodimer attached via their hinge domain, rad21/scc1 which link them, and psc3/scc3, which interacts with rad21. Interacts with swi6. The interaction with swi6 may contribute to recruit cohesin complex to heterochromatin.

It localises to the nucleus. The protein localises to the chromosome. The protein resides in the centromere. Its function is as follows. Component of cohesin complex, a complex required for the cohesion of sister chromatids after DNA replication. The cohesin complex apparently forms a large proteinaceous ring within which sister chromatids can be trapped. At anaphase, the rad21 subunit of the cohesin complex is cleaved and dissociates from chromatin, allowing sister chromatids to segregate. The cohesin complex may also play a role in spindle pole assembly during mitosis. In Schizosaccharomyces pombe (strain 972 / ATCC 24843) (Fission yeast), this protein is Cohesin subunit psc3 (psc3).